The following is a 317-amino-acid chain: Putative 2-hydroxyacid dehydrogenase SAB2178 (317 aa).

Residues 155-156 (EI), 234-236 (ASR), and D260 contribute to the NAD(+) site. The active site involves R236. E265 is a catalytic residue. The Proton donor role is filled by H283. Residue 283-286 (HIGN) participates in NAD(+) binding.

The protein belongs to the D-isomer specific 2-hydroxyacid dehydrogenase family.

In Staphylococcus aureus (strain bovine RF122 / ET3-1), this protein is Putative 2-hydroxyacid dehydrogenase SAB2178.